The following is a 264-amino-acid chain: Cancer/testis antigen 55 (264 aa).

The disordered stretch occupies residues 242-264; the sequence is SSSGFQDDGGLGRPKRERRSQSI. A compositionally biased stretch (basic residues) spans 254–264; it reads RPKRERRSQSI.

In terms of assembly, interacts with GABARAP; this interaction may be important for GABARAP protein stability. Isoform 1 interacts with LAMP2; this interaction may be important for LAMP2 protein stability. In terms of tissue distribution, testis-specific. Expressed in spermatozoa (at protein level).

It localises to the cytoplasm. It is found in the cytoplasmic vesicle. Its subcellular location is the secretory vesicle. The protein localises to the acrosome. The protein resides in the cell projection. It localises to the cilium. It is found in the flagellum. Functionally, plays a role in spermatogenesis, possibly acting in the regulation of the autophagy pathway. This chain is Cancer/testis antigen 55 (CT55), found in Homo sapiens (Human).